The sequence spans 162 residues: UPF0305 protein MmarC5_0909 (162 aa).

The protein belongs to the UPF0305 family.

This Methanococcus maripaludis (strain C5 / ATCC BAA-1333) protein is UPF0305 protein MmarC5_0909.